The following is an 863-amino-acid chain: Protein translocase subunit SecA (863 aa).

ATP-binding positions include Gln-88, 106–110 (GEGKT), and Asp-507. Residues 806–863 (KSHEQNEQFLSNTTESGVNENGEAQITKVPRNSPCPCGSGKKYKECHGKSGPKKGILA) form a disordered region. The segment covering 812-829 (EQFLSNTTESGVNENGEA) has biased composition (polar residues). The Zn(2+) site is built by Cys-840, Cys-842, Cys-851, and His-852.

The protein belongs to the SecA family. As to quaternary structure, monomer and homodimer. Part of the essential Sec protein translocation apparatus which comprises SecA, SecYEG and auxiliary proteins SecDF-YajC and YidC. The cofactor is Zn(2+).

The protein localises to the cell inner membrane. Its subcellular location is the cytoplasm. The enzyme catalyses ATP + H2O + cellular proteinSide 1 = ADP + phosphate + cellular proteinSide 2.. Part of the Sec protein translocase complex. Interacts with the SecYEG preprotein conducting channel. Has a central role in coupling the hydrolysis of ATP to the transfer of proteins into and across the cell membrane, serving as an ATP-driven molecular motor driving the stepwise translocation of polypeptide chains across the membrane. The protein is Protein translocase subunit SecA of Campylobacter lari (strain RM2100 / D67 / ATCC BAA-1060).